The chain runs to 83 residues: MKASMFLALAGLVLLFVVGYASESEEKESPRELLSKIFAVDDFKGEERGCKGFGDSCTPGKNECCPNYACSSKHKWCKVYLGK.

The first 21 residues, 1 to 21 (MKASMFLALAGLVLLFVVGYA), serve as a signal peptide directing secretion. Residues 22–48 (SESEEKESPRELLSKIFAVDDFKGEER) constitute a propeptide that is removed on maturation. Disulfide bonds link cysteine 50–cysteine 65, cysteine 57–cysteine 70, and cysteine 64–cysteine 77. The residue at position 81 (leucine 81) is a Leucine amide.

It belongs to the neurotoxin 10 (Hwtx-1) family. 15 (Hntx-3) subfamily. As to quaternary structure, monomer. As to expression, expressed by the venom gland.

Its subcellular location is the secreted. In terms of biological role, selective antagonist of neuronal tetrodotoxin (TTX)-sensitive voltage-gated sodium channels (IC(50)=1270 nM on Nav1.1/SCN1A, 270 nM on Nav1.2/SCN2A, 491 nM on Nav1.3/SCN3A and 232 nM on Nav1.7/SCN9A). This toxin suppress Nav1.7 current amplitude without significantly altering the activation, inactivation, and repriming kinetics. Short extreme depolarizations partially activate the toxin-bound channel, indicating voltage-dependent inhibition of this toxin. This toxin increases the deactivation of the Nav1.7 current after extreme depolarizations. The toxin-Nav1.7 complex is gradually dissociated upon prolonged strong depolarizations in a voltage-dependent manner, and the unbound toxin rebinds to Nav1.7 after a long repolarization. Moreover, analysis of chimeric channels showed that the DIIS3-S4 linker is critical for toxin binding to Nav1.7. These data are consistent with this toxin interacting with Nav1.7 site 4 and trapping the domain II voltage sensor in the closed state. The protein is Hainantoxin-III 6 of Cyriopagopus hainanus (Chinese bird spider).